Reading from the N-terminus, the 397-residue chain is MAKAKFERTKPHVNIGTIGHIDHGKTTLTAAITKVLHDAYPDLNEATPFDNIDKAPEERQRGITISIAHVEYQTEARHYAHVDCPGHADYIKNMITGAAQMDGAILVVAATDGPMPQTKEHVLLARQVGVPYIVVALNKADMVDDEEIMELVELEVRELLSEYEFPGDDLPVVRVSALKALEGDAQWTQSVLDLMKAVDESIPEPERDVDKPFLMPIEDVFTITGRGTVVTGRIERGVLKVNETVDIIGIKTEKTTTTVTGIEMFRKLLDEGQAGENVGLLLRGIKREDVERGQVIIKPGSVTPHTEFEAQAYILSKDEGGRHTPFFNNYRPQFYFRTTDVTGVVHLPEGTEMVMPGDNTEMRVELIQPVAMEEGLKFAIREGGRTVGAGQVTKIVK.

The tr-type G domain occupies 10 to 206 (KPHVNIGTIG…AVDESIPEPE (197 aa)). A G1 region spans residues 19–26 (GHIDHGKT). Residue 19–26 (GHIDHGKT) participates in GTP binding. Residue Thr-26 participates in Mg(2+) binding. The interval 62–66 (GITIS) is G2. The G3 stretch occupies residues 83 to 86 (DCPG). GTP-binding positions include 83-87 (DCPGH) and 138-141 (NKAD). The G4 stretch occupies residues 138 to 141 (NKAD). The segment at 176 to 178 (SAL) is G5.

It belongs to the TRAFAC class translation factor GTPase superfamily. Classic translation factor GTPase family. EF-Tu/EF-1A subfamily. As to quaternary structure, monomer.

The protein localises to the cytoplasm. It carries out the reaction GTP + H2O = GDP + phosphate + H(+). In terms of biological role, GTP hydrolase that promotes the GTP-dependent binding of aminoacyl-tRNA to the A-site of ribosomes during protein biosynthesis. The protein is Elongation factor Tu-1 of Streptomyces ramocissimus.